Consider the following 154-residue polypeptide: Small ribosomal subunit protein uS13m (154 aa).

The transit peptide at 1–30 (MLGLRRSATTLFDISQSLLRNVTFHGLRVQ) directs the protein to the mitochondrion. A disordered region spans residues 121 to 154 (RHGLPCRGQRTSTNARTKKGKAVAIAGKKKAPRK). Residues 136 to 154 (RTKKGKAVAIAGKKKAPRK) are compositionally biased toward basic residues.

This sequence belongs to the universal ribosomal protein uS13 family. As to quaternary structure, part of the small ribosomal subunit.

The protein resides in the mitochondrion. Its function is as follows. Located at the top of the head of the small subunit, it contacts several helices of the 18S rRNA. The sequence is that of Small ribosomal subunit protein uS13m (RPS13) from Arabidopsis thaliana (Mouse-ear cress).